A 329-amino-acid chain; its full sequence is Sulfate-binding protein (329 aa).

A signal peptide spans 1–19 (MKKWGVGFTLLLASTSILA).

The protein belongs to the prokaryotic sulfate-binding protein family.

Its subcellular location is the periplasm. Functionally, this protein specifically binds sulfate and is involved in its transmembrane transport. The protein is Sulfate-binding protein (sbp) of Salmonella typhimurium (strain LT2 / SGSC1412 / ATCC 700720).